A 238-amino-acid polypeptide reads, in one-letter code: Probable transcriptional regulatory protein MGAS10750_Spy0264 (238 aa).

Belongs to the TACO1 family. YeeN subfamily.

It is found in the cytoplasm. The protein is Probable transcriptional regulatory protein MGAS10750_Spy0264 of Streptococcus pyogenes serotype M4 (strain MGAS10750).